The chain runs to 225 residues: Ribonuclease 3 (225 aa).

Residues F4 to N133 enclose the RNase III domain. E46 is a binding site for Mg(2+). The active site involves D50. Mg(2+) contacts are provided by N119 and E122. Residue E122 is part of the active site. A DRBM domain is found at D158–K225.

It belongs to the ribonuclease III family. As to quaternary structure, homodimer. It depends on Mg(2+) as a cofactor.

It is found in the cytoplasm. The enzyme catalyses Endonucleolytic cleavage to 5'-phosphomonoester.. Its function is as follows. Digests double-stranded RNA. Involved in the processing of primary rRNA transcript to yield the immediate precursors to the large and small rRNAs (23S and 16S). Processes some mRNAs, and tRNAs when they are encoded in the rRNA operon. Processes pre-crRNA and tracrRNA of type II CRISPR loci if present in the organism. This is Ribonuclease 3 from Rickettsia prowazekii (strain Madrid E).